A 166-amino-acid chain; its full sequence is Large ribosomal subunit protein uL10 (166 aa).

It belongs to the universal ribosomal protein uL10 family. As to quaternary structure, part of the ribosomal stalk of the 50S ribosomal subunit. The N-terminus interacts with L11 and the large rRNA to form the base of the stalk. The C-terminus forms an elongated spine to which L12 dimers bind in a sequential fashion forming a multimeric L10(L12)X complex.

In terms of biological role, forms part of the ribosomal stalk, playing a central role in the interaction of the ribosome with GTP-bound translation factors. The protein is Large ribosomal subunit protein uL10 of Pseudomonas putida (strain GB-1).